Reading from the N-terminus, the 478-residue chain is Transposase for insertion sequence element IS231C (478 aa).

The protein belongs to the transposase 11 family.

Involved in the transposition of the insertion sequence. The protein is Transposase for insertion sequence element IS231C of Bacillus thuringiensis subsp. berliner.